A 498-amino-acid chain; its full sequence is WD repeat-containing protein 55 homolog (498 aa).

The disordered stretch occupies residues 1-131 (MHTHNNFKTP…ATFDLDEDDE (131 aa)). Composition is skewed to acidic residues over residues 12 to 23 (DEDELDDLDEDM) and 31 to 48 (IEQE…EYDL). Low complexity-rich tracts occupy residues 67–82 (NDSS…NAAD) and 93–103 (AGGVTAGGATS). WD repeat units follow at residues 154–193 (KLED…NKLL), 198–237 (VHSK…LKKL), 241–279 (AHDD…AIFE), 282–321 (ELED…MYVQ), 324–363 (PYEE…YHCD), and 408–447 (QHNM…DFGD). The disordered stretch occupies residues 478–498 (DLTKENADGDDDPGAGPSNMA).

This sequence belongs to the WD repeat WDR55 family.

This chain is WD repeat-containing protein 55 homolog, found in Drosophila melanogaster (Fruit fly).